The chain runs to 706 residues: Acyl-coenzyme A oxidase (706 aa).

Positions 682-706 are disordered; sequence MLNRPSKEERERFEKSTETAKILSK. Over residues 686–699 the composition is skewed to basic and acidic residues; the sequence is PSKEERERFEKSTE.

The protein belongs to the acyl-CoA oxidase family. FAD is required as a cofactor.

It is found in the peroxisome. The enzyme catalyses a 2,3-saturated acyl-CoA + O2 = a (2E)-enoyl-CoA + H2O2. It participates in lipid metabolism; peroxisomal fatty acid beta-oxidation. This Debaryomyces hansenii (strain ATCC 36239 / CBS 767 / BCRC 21394 / JCM 1990 / NBRC 0083 / IGC 2968) (Yeast) protein is Acyl-coenzyme A oxidase (POX1).